The sequence spans 448 residues: Asparagine--tRNA ligase (448 aa).

Belongs to the class-II aminoacyl-tRNA synthetase family. Homodimer.

The protein resides in the cytoplasm. The enzyme catalyses tRNA(Asn) + L-asparagine + ATP = L-asparaginyl-tRNA(Asn) + AMP + diphosphate + H(+). The sequence is that of Asparagine--tRNA ligase from Streptococcus thermophilus (strain CNRZ 1066).